The primary structure comprises 306 residues: ClpXP adapter protein SpxH (306 aa).

The protein belongs to the SpxH family. Interacts with Spx.

Its subcellular location is the cytoplasm. Its function is as follows. Adapter protein required for efficient degradation of Spx by ClpXP under non-stress conditions. Interaction with Spx stabilizes Spx and exposes the C-terminus of Spx for recognition and proteolysis by ClpXP. This Halalkalibacterium halodurans (strain ATCC BAA-125 / DSM 18197 / FERM 7344 / JCM 9153 / C-125) (Bacillus halodurans) protein is ClpXP adapter protein SpxH.